A 603-amino-acid chain; its full sequence is D-3-phosphoglycerate dehydrogenase 1, chloroplastic (603 aa).

The transit peptide at 1–54 directs the protein to the chloroplast; sequence MSATAAASSSIAVATNSLRNVTLSSRSPLPSAISVAFPSRGRNTLQRRLVLVSC. Residues 210–211, D230, 289–291, and D315 contribute to the NAD(+) site; these read KV and VAR. R291 is a catalytic residue. E320 is a catalytic residue. H339 (proton donor) is an active-site residue. 339–342 is a binding site for NAD(+); that stretch reads HLGA. One can recognise an ACT domain in the interval 531–603; the sequence is IILCRQVDQP…AVEEFVFLKL (73 aa).

Belongs to the D-isomer specific 2-hydroxyacid dehydrogenase family. In terms of tissue distribution, ubiquitous, but highly expressed in roots. Expressed in vasculature, root and shoot meristems, distal part of cotyledons and leaves, anther, stigma and pollen grains. Detected at the tip of the cotyledons in late embryos.

It localises to the plastid. The protein resides in the chloroplast. It catalyses the reaction (2R)-3-phosphoglycerate + NAD(+) = 3-phosphooxypyruvate + NADH + H(+). The protein operates within amino-acid biosynthesis; L-serine biosynthesis; L-serine from 3-phospho-D-glycerate: step 1/3. Its activity is regulated as follows. Partially inhibited by 5 mM serine. In terms of biological role, involved in the plastidial phosphorylated pathway of serine biosynthesis (PPSB). Required for mature pollen development. The protein is D-3-phosphoglycerate dehydrogenase 1, chloroplastic (PGDH1) of Arabidopsis thaliana (Mouse-ear cress).